A 517-amino-acid polypeptide reads, in one-letter code: Bifunctional purine biosynthesis protein PurH (517 aa).

The MGS-like domain maps to 1-146 (MKRLALLSTS…KNFAHLTVLC (146 aa)).

It belongs to the PurH family.

It carries out the reaction (6R)-10-formyltetrahydrofolate + 5-amino-1-(5-phospho-beta-D-ribosyl)imidazole-4-carboxamide = 5-formamido-1-(5-phospho-D-ribosyl)imidazole-4-carboxamide + (6S)-5,6,7,8-tetrahydrofolate. The enzyme catalyses IMP + H2O = 5-formamido-1-(5-phospho-D-ribosyl)imidazole-4-carboxamide. The protein operates within purine metabolism; IMP biosynthesis via de novo pathway; 5-formamido-1-(5-phospho-D-ribosyl)imidazole-4-carboxamide from 5-amino-1-(5-phospho-D-ribosyl)imidazole-4-carboxamide (10-formyl THF route): step 1/1. It functions in the pathway purine metabolism; IMP biosynthesis via de novo pathway; IMP from 5-formamido-1-(5-phospho-D-ribosyl)imidazole-4-carboxamide: step 1/1. This Trichodesmium erythraeum (strain IMS101) protein is Bifunctional purine biosynthesis protein PurH.